The sequence spans 392 residues: Protein O-glucosyltransferase 1 (392 aa).

The N-terminal stretch at 1–23 (MERLSGCRLRPWMLLLLLFPVQG) is a signal peptide. 4 cysteine pairs are disulfide-bonded: Cys49/Cys56, Cys54/Cys357, Cys102/Cys108, and Cys263/Cys286. N-linked (GlcNAc...) asparagine glycosylation occurs at Asn53. The interval 103 to 107 (MFPSR) is interaction with the consensus sequence C-X-S-X-[PA]-C in peptide substrates. Asp133 functions as the Proton donor/acceptor in the catalytic mechanism. The interaction with the consensus sequence C-X-S-X-[PA]-C in peptide substrates stretch occupies residues 172 to 178 (AVWPLYP). A UDP-alpha-D-glucose-binding site is contributed by Tyr177. N-linked (GlcNAc...) asparagine glycosylation is present at Asn204. Residues Ser212, Arg218, and 274–279 (VAASFR) each bind UDP-alpha-D-glucose. An N-linked (GlcNAc...) asparagine glycan is attached at Asn373. Positions 389 to 392 (KTEL) match the Prevents secretion from ER motif.

The protein belongs to the glycosyltransferase 90 family.

The protein localises to the endoplasmic reticulum lumen. The catalysed reaction is L-seryl-[EGF-like domain protein] + UDP-alpha-D-xylose = 3-O-(beta-D-xylosyl)-L-seryl-[EGF-like domain protein] + UDP + H(+). The enzyme catalyses L-seryl-[EGF-like domain protein] + UDP-alpha-D-glucose = 3-O-(beta-D-glucosyl)-L-seryl-[EGF-like domain protein] + UDP + H(+). It functions in the pathway protein modification; protein glycosylation. Functionally, dual specificity glycosyltransferase that catalyzes the transfer of glucose and xylose from UDP-glucose and UDP-xylose, respectively, to a serine residue found in the consensus sequence of C-X-S-X-P-C. Specifically targets extracellular EGF repeats of protein such as CRB2, F7, F9 and NOTCH2. Acts as a positive regulator of Notch signaling by mediating O-glucosylation of Notch, leading to regulate muscle development. Notch glucosylation does not affect Notch ligand binding. Required during early development to promote gastrulation: acts by mediating O-glucosylation of CRB2, which is required for CRB2 localization to the cell membrane. This is Protein O-glucosyltransferase 1 (Poglut1) from Rattus norvegicus (Rat).